A 104-amino-acid polypeptide reads, in one-letter code: Cytochrome c oxidase assembly factor 6 (104 aa).

Positions 1 to 22 (MGLFSFDGGKKESQPPNTRSQR) are disordered. One can recognise a CHCH domain in the interval 22 to 76 (RKLCWESRDAFFQCLDKADILDAMDPKNSKSIKSHCKVENEKFEENCAHSWIKYF). The Cx9C motif motif lies at 25–35 (CWESRDAFFQC). 2 disulfides stabilise this stretch: cysteine 25-cysteine 68 and cysteine 35-cysteine 57. Residues 57 to 68 (CKVENEKFEENC) carry the Cx10C motif motif.

This sequence belongs to the cytochrome c oxidase subunit 6B family. As to quaternary structure, interacts with COX2.

It localises to the cytoplasm. It is found in the nucleus. Its subcellular location is the mitochondrion intermembrane space. Functionally, involved in the maturation of the mitochondrial respiratory chain complex IV subunit MT-CO2/COX2. Thereby, may regulate early steps of complex IV assembly. Mitochondrial respiratory chain complex IV or cytochrome c oxidase is the component of the respiratory chain that catalyzes the transfer of electrons from intermembrane space cytochrome c to molecular oxygen in the matrix and as a consequence contributes to the proton gradient involved in mitochondrial ATP synthesis. May also be required for efficient formation of respiratory supercomplexes comprised of complexes III and IV. The protein is Cytochrome c oxidase assembly factor 6 of Saccharomyces cerevisiae (strain ATCC 204508 / S288c) (Baker's yeast).